The sequence spans 36 residues: Potassium channel toxin alpha-KTx 11.3 (36 aa).

Intrachain disulfides connect C8-C27, C13-C33, and C17-C35.

Belongs to the short scorpion toxin superfamily. Potassium channel inhibitor family. Alpha-KTx 11 subfamily. Expressed by the venom gland.

The protein resides in the secreted. Its function is as follows. Binds and inhibits voltage-sensitive potassium channels. Inhibits the vertebrate potassium channel Kv1.1/KCNA1 with low affinity. This chain is Potassium channel toxin alpha-KTx 11.3, found in Parabuthus granulatus (Granulated thick-tailed scorpion).